The chain runs to 282 residues: L-allo-isoleucyltransferase (282 aa).

Cys105 acts as the Acyl-thioester intermediate in catalysis. Positions 169 to 261 (HTQSTYTPSD…DGQHHDFVDG (93 aa)) constitute an AB hydrolase-1 domain.

Belongs to the AB hydrolase superfamily.

It carries out the reaction holo-[CmaD peptidyl-carrier protein] + L-alloisoleucyl-[CmaA peptidyl-carrier protein] = L-alloisoleucyl-[CmaD peptidyl-carrier protein] + holo-[CmaA peptidyl-carrier protein]. Functionally, involved in the biosynthesis of the phytotoxin coronatine (COR). Catalyzes the transfer of the aminoacyl group covalently attached to the pantetheinyl arm of CmaA to the holo-pantetheinyl arm of CmaD. During the shuttling process, CmaE generates a covalent-aminoacyl-S-Cys enzyme intermediate by the action of its donor substrate L-aminoacyl-S-CmaA and delivers it to the sulfhydryl group attached to the phosphopantetheinyl arm on CmaD. The polypeptide is L-allo-isoleucyltransferase (Pseudomonas savastanoi pv. glycinea (Pseudomonas syringae pv. glycinea)).